The primary structure comprises 134 residues: Arsenate reductase 1 (134 aa).

Residues C11, C83, and C90 each act as nucleophile in the active site. 2 disulfides stabilise this stretch: C11/C83 and C83/C90.

Belongs to the low molecular weight phosphotyrosine protein phosphatase family. Thioredoxin-coupled ArsC subfamily.

It localises to the cytoplasm. It carries out the reaction arsenate + [thioredoxin]-dithiol + H(+) = arsenite + [thioredoxin]-disulfide + H2O. Functionally, catalyzes the reduction of arsenate [As(V)] to arsenite [As(III)]. The chain is Arsenate reductase 1 from Bacillus cereus (strain ATCC 10987 / NRS 248).